A 315-amino-acid chain; its full sequence is MATTKLGNTKSASRAINYAEKRAEEKSGLNCDVDYAKSAFKQTRALYGKEDGIQAHTVIQSFKPGEVTPEQCNQLGLELAEKIAPNHQVAVYTHTDKDHYHNHIVINSVDLETGKKYQSNKKQRDLVKKENDNICREHGLSVTERGIAKMRYTQAEKGIVFDRDEYSWKDELRDLIENAKTHTSNLETFSEHLEEKGVGVKLRGETISYKPENENKWVRGRTLGSEYEKGAIDHEHERHQKQQREPEYADEFKINWDAVEQHTEQLKQRRVERAQETKQAHSKISSRDTRESENQRERAKGNNIRIERGDEGLSR.

Residues 263–315 form a disordered region; the sequence is TEQLKQRRVERAQETKQAHSKISSRDTRESENQRERAKGNNIRIERGDEGLSR.

Functionally, this protein is probably required for relaxation complex formation and plasmid mobilization by conjugative plasmids. This chain is Protein rlx (rlx), found in Staphylococcus aureus.